A 286-amino-acid chain; its full sequence is Aminoglycoside N(3)-acetyltransferase VIII (286 aa).

This sequence belongs to the antibiotic N-acetyltransferase family.

It carries out the reaction a 2-deoxystreptamine antibiotic + acetyl-CoA = an N(3)-acetyl-2-deoxystreptamine antibiotic + CoA + H(+). Its function is as follows. Resistance to neomycin. This is Aminoglycoside N(3)-acetyltransferase VIII (aacC8) from Streptomyces fradiae (Streptomyces roseoflavus).